A 201-amino-acid polypeptide reads, in one-letter code: Outer-membrane lipoprotein carrier protein (201 aa).

The signal sequence occupies residues 1–21; the sequence is MKKVLLTVCAIALFGSQAAWA.

The protein belongs to the LolA family. As to quaternary structure, monomer.

It localises to the periplasm. Functionally, participates in the translocation of lipoproteins from the inner membrane to the outer membrane. Only forms a complex with a lipoprotein if the residue after the N-terminal Cys is not an aspartate (The Asp acts as a targeting signal to indicate that the lipoprotein should stay in the inner membrane). This chain is Outer-membrane lipoprotein carrier protein, found in Proteus mirabilis (strain HI4320).